The following is a 323-amino-acid chain: Sphingolipid delta(4)-desaturase DES1 (323 aa).

The next 2 helical transmembrane spans lie at 41–61 (YNLIWVVMLMVAAQLTAFYLV) and 68–88 (WVVFWAYVFGSCISHSMTLAI). The Histidine box-1 motif lies at 89 to 93 (HEISH). Residues 102–122 (AMWNRWFGIFANLPLGLPYSI) traverse the membrane as a helical segment. Positions 128-132 (HMDHH) match the Histidine box-2 motif. 3 helical membrane-spanning segments follow: residues 159–179 (KFIWIVLQPFFYAIRPLCINP), 185–205 (LEIINLLAQLFFDIVIYYLWG), and 209–229 (IFYMLAGSVLGLGLHPISGHF). Positions 259–263 (HNEHH) match the Histidine box-3 motif.

Belongs to the fatty acid desaturase type 1 family. DEGS subfamily. As to quaternary structure, interacts with RLBP1; the interaction increases synthesis of chromophore-precursors by DEGS1. Expressed in retina and retinal pigment epithelium by Mueller cells (at protein level).

It is found in the endoplasmic reticulum membrane. It catalyses the reaction an N-acylsphinganine + 2 Fe(II)-[cytochrome b5] + O2 + 2 H(+) = an N-acylsphing-4-enine + 2 Fe(III)-[cytochrome b5] + 2 H2O. The catalysed reaction is all-trans-retinol = 11-cis-retinol. The enzyme catalyses all-trans-retinol = 9-cis-retinol. It carries out the reaction all-trans-retinol = 13-cis-retinol. It catalyses the reaction 11-cis-retinol = 13-cis-retinol. The catalysed reaction is 11-cis-retinol = 9-cis-retinol. In terms of biological role, has sphingolipid-delta-4-desaturase activity. Converts D-erythro-sphinganine to D-erythro-sphingosine (E-sphing-4-enine). Catalyzes the equilibrium isomerization of retinols. The protein is Sphingolipid delta(4)-desaturase DES1 (DEGS1) of Gallus gallus (Chicken).